The following is a 226-amino-acid chain: Pathogenesis-related protein R major form (226 aa).

The first 25 residues, 1–25, serve as a signal peptide directing secretion; the sequence is MNFLKSFPFFAFLYFGQYFVAVTHA. 8 disulfide bridges follow: cysteine 34-cysteine 225, cysteine 75-cysteine 85, cysteine 90-cysteine 96, cysteine 140-cysteine 214, cysteine 145-cysteine 197, cysteine 153-cysteine 163, cysteine 167-cysteine 176, and cysteine 177-cysteine 184.

This sequence belongs to the thaumatin family.

It is found in the vacuole. In Nicotiana tabacum (Common tobacco), this protein is Pathogenesis-related protein R major form.